Here is a 346-residue protein sequence, read N- to C-terminus: Holliday junction branch migration complex subunit RuvB (346 aa).

The segment at 1-182 (MSEAARLIAP…FGIPVRLNFY (182 aa)) is large ATPase domain (RuvB-L). ATP contacts are provided by residues L21, R22, G63, K66, T67, T68, 129–131 (EDF), R172, Y182, and R219. Residue T67 coordinates Mg(2+). The tract at residues 183–253 (TVEELELIVR…IADEALTRLL (71 aa)) is small ATPAse domain (RuvB-S). The head domain (RuvB-H) stretch occupies residues 256–346 (SMGLDQLDRR…SQFRLTLEDD (91 aa)). DNA-binding residues include R292, R311, and R316.

This sequence belongs to the RuvB family. In terms of assembly, homohexamer. Forms an RuvA(8)-RuvB(12)-Holliday junction (HJ) complex. HJ DNA is sandwiched between 2 RuvA tetramers; dsDNA enters through RuvA and exits via RuvB. An RuvB hexamer assembles on each DNA strand where it exits the tetramer. Each RuvB hexamer is contacted by two RuvA subunits (via domain III) on 2 adjacent RuvB subunits; this complex drives branch migration. In the full resolvosome a probable DNA-RuvA(4)-RuvB(12)-RuvC(2) complex forms which resolves the HJ.

It localises to the cytoplasm. The enzyme catalyses ATP + H2O = ADP + phosphate + H(+). The RuvA-RuvB-RuvC complex processes Holliday junction (HJ) DNA during genetic recombination and DNA repair, while the RuvA-RuvB complex plays an important role in the rescue of blocked DNA replication forks via replication fork reversal (RFR). RuvA specifically binds to HJ cruciform DNA, conferring on it an open structure. The RuvB hexamer acts as an ATP-dependent pump, pulling dsDNA into and through the RuvAB complex. RuvB forms 2 homohexamers on either side of HJ DNA bound by 1 or 2 RuvA tetramers; 4 subunits per hexamer contact DNA at a time. Coordinated motions by a converter formed by DNA-disengaged RuvB subunits stimulates ATP hydrolysis and nucleotide exchange. Immobilization of the converter enables RuvB to convert the ATP-contained energy into a lever motion, pulling 2 nucleotides of DNA out of the RuvA tetramer per ATP hydrolyzed, thus driving DNA branch migration. The RuvB motors rotate together with the DNA substrate, which together with the progressing nucleotide cycle form the mechanistic basis for DNA recombination by continuous HJ branch migration. Branch migration allows RuvC to scan DNA until it finds its consensus sequence, where it cleaves and resolves cruciform DNA. The sequence is that of Holliday junction branch migration complex subunit RuvB from Sinorhizobium medicae (strain WSM419) (Ensifer medicae).